The sequence spans 250 residues: Pyridoxine 5'-phosphate synthase (250 aa).

3-amino-2-oxopropyl phosphate-binding residues include Asn-8 and Arg-19. The Proton acceptor role is filled by His-44. Arg-46 and His-51 together coordinate 1-deoxy-D-xylulose 5-phosphate. Glu-76 acts as the Proton acceptor in catalysis. A 1-deoxy-D-xylulose 5-phosphate-binding site is contributed by Thr-106. The Proton donor role is filled by His-200. Residues Asp-201 and 223–224 (GH) each bind 3-amino-2-oxopropyl phosphate.

It belongs to the PNP synthase family. As to quaternary structure, homooctamer; tetramer of dimers.

Its subcellular location is the cytoplasm. The enzyme catalyses 3-amino-2-oxopropyl phosphate + 1-deoxy-D-xylulose 5-phosphate = pyridoxine 5'-phosphate + phosphate + 2 H2O + H(+). The protein operates within cofactor biosynthesis; pyridoxine 5'-phosphate biosynthesis; pyridoxine 5'-phosphate from D-erythrose 4-phosphate: step 5/5. Functionally, catalyzes the complicated ring closure reaction between the two acyclic compounds 1-deoxy-D-xylulose-5-phosphate (DXP) and 3-amino-2-oxopropyl phosphate (1-amino-acetone-3-phosphate or AAP) to form pyridoxine 5'-phosphate (PNP) and inorganic phosphate. This chain is Pyridoxine 5'-phosphate synthase, found in Allorhizobium ampelinum (strain ATCC BAA-846 / DSM 112012 / S4) (Agrobacterium vitis (strain S4)).